The primary structure comprises 330 residues: Inactive hydroxysteroid dehydrogenase-like protein 1 (330 aa).

Position 2 is an N-acetylalanine (A2). The segment at 2–82 (AAVDSFYLLY…SGATDGIGRA (81 aa)) is required for mitochondria translocation. Residues 74–80 (GATDGIG), D125, and K222 each bind NADP(+).

Belongs to the short-chain dehydrogenases/reductases (SDR) family. 17-beta-HSD 3 subfamily. In terms of assembly, interacts with STYXL1.

The protein localises to the mitochondrion. The sequence is that of Inactive hydroxysteroid dehydrogenase-like protein 1 (HSDL1) from Pongo abelii (Sumatran orangutan).